We begin with the raw amino-acid sequence, 390 residues long: Probable tRNA pseudouridine synthase D (390 aa).

Asp-93 functions as the Nucleophile in the catalytic mechanism. The TRUD domain maps to 166 to 353 (YVLNYYGIQR…YGTRRKMITP (188 aa)).

The protein belongs to the pseudouridine synthase TruD family.

It carries out the reaction uridine(13) in tRNA = pseudouridine(13) in tRNA. In terms of biological role, could be responsible for synthesis of pseudouridine from uracil-13 in transfer RNAs. The sequence is that of Probable tRNA pseudouridine synthase D from Methanococcus maripaludis (strain C5 / ATCC BAA-1333).